The primary structure comprises 303 residues: Putative S-adenosyl-L-methionine-dependent methyltransferase MSMEG_1479/MSMEI_1443 (303 aa).

S-adenosyl-L-methionine-binding positions include Asp130 and 159–160 (DL).

Belongs to the UPF0677 family.

Its function is as follows. Exhibits S-adenosyl-L-methionine-dependent methyltransferase activity. This is Putative S-adenosyl-L-methionine-dependent methyltransferase MSMEG_1479/MSMEI_1443 from Mycolicibacterium smegmatis (strain ATCC 700084 / mc(2)155) (Mycobacterium smegmatis).